The sequence spans 715 residues: MTAKTKPAPDIATLTKPKAKVELMRLRLEIEGHDKAYYQDDAPKISDADYDALRRRLEAIEQKFPELVNASSPTQTVGAAPARGFAKVQHAVPMLSLGNAFADDEVAEFALRVQRFLKLDDVPAIVAEPKIDGLSLSLRYENGELVRAATRGDGFTGEDVTANVRTIKDVPNTLKGKHIPATCELRGEVYMLKQDFLALNKRQEEANETVFANPRNSAAGSLRQKDVTVTASRPLKFFAYAWGEMSDYPMEEPTQHKMLQWLDHAGFVVNPEITLCHSVEDALAFYRRIGEKRASLPYDIDGVVYKVDRLDYQERLGFVSRSPRWAIAHKFAAEQATTVLEKIDIQVGRTGAMTPVARLQPVTVGGVVVQNATLHNEDYIKGIGNDGEPIRDGVDIREGDTVVVQRAGDVIPQIVSVVMEKRPAGAEPYHFPHKCPVCGSHAVREEGEAVWRCTGALICPAQAVERLKHFVSRLAFDIDGLGEKQIELFHERGWVQEPADIFTLKARNAELKLEQLEGYGETSVRNLFAAIDARRSIELHRLVFALGIRHVGEGNAKLLARHYGTLDAFLSAMRAAADAQTEEGNTSEAYQDLDNIAGIGDVVAEAVVEFFAEERNIKALDALLAELTEVLPAEQARRDTAVAGKTVVFTGSLSKFTRDEAKAAAERLGAKVAGSVSKKTDYVVAGEDAGSKLTKAKDLGVTVLTEDEWLALIGN.

NAD(+)-binding positions include 47–51 (DADYD), 96–97 (SL), and glutamate 128. The N6-AMP-lysine intermediate role is filled by lysine 130. 4 residues coordinate NAD(+): arginine 151, glutamate 188, lysine 306, and lysine 330. Zn(2+) is bound by residues cysteine 435, cysteine 438, cysteine 453, and cysteine 459. The 79-residue stretch at 637 to 715 (RRDTAVAGKT…EDEWLALIGN (79 aa)) folds into the BRCT domain.

This sequence belongs to the NAD-dependent DNA ligase family. LigA subfamily. Requires Mg(2+) as cofactor. The cofactor is Mn(2+).

The enzyme catalyses NAD(+) + (deoxyribonucleotide)n-3'-hydroxyl + 5'-phospho-(deoxyribonucleotide)m = (deoxyribonucleotide)n+m + AMP + beta-nicotinamide D-nucleotide.. Functionally, DNA ligase that catalyzes the formation of phosphodiester linkages between 5'-phosphoryl and 3'-hydroxyl groups in double-stranded DNA using NAD as a coenzyme and as the energy source for the reaction. It is essential for DNA replication and repair of damaged DNA. In Rhodopseudomonas palustris (strain ATCC BAA-98 / CGA009), this protein is DNA ligase.